The chain runs to 244 residues: Uridylate kinase (244 aa).

11 to 14 (KLSG) is a binding site for ATP. The interval 19-24 (GSLGYG) is involved in allosteric activation by GTP. Gly-53 contributes to the UMP binding site. Positions 54 and 58 each coordinate ATP. UMP contacts are provided by residues Asp-73 and 134-141 (SGNPFFTT). Residues Thr-161, Tyr-167, and Asp-170 each contribute to the ATP site.

Belongs to the UMP kinase family. In terms of assembly, homohexamer.

It is found in the cytoplasm. It catalyses the reaction UMP + ATP = UDP + ADP. The protein operates within pyrimidine metabolism; CTP biosynthesis via de novo pathway; UDP from UMP (UMPK route): step 1/1. Its activity is regulated as follows. Allosterically activated by GTP. Inhibited by UTP. Catalyzes the reversible phosphorylation of UMP to UDP. The chain is Uridylate kinase from Trichodesmium erythraeum (strain IMS101).